The primary structure comprises 100 residues: uncharacterized protein (100 aa).

The N-terminal stretch at Met1–Ala26 is a signal peptide.

This is an uncharacterized protein from Bacillus subtilis (strain 168).